Here is a 366-residue protein sequence, read N- to C-terminus: Flagellar P-ring protein (366 aa).

The N-terminal stretch at 1–22 is a signal peptide; the sequence is MFTRKSVILMAVLLIWSAVSYA.

This sequence belongs to the FlgI family. The basal body constitutes a major portion of the flagellar organelle and consists of four rings (L,P,S, and M) mounted on a central rod.

The protein resides in the periplasm. It is found in the bacterial flagellum basal body. Functionally, assembles around the rod to form the L-ring and probably protects the motor/basal body from shearing forces during rotation. The sequence is that of Flagellar P-ring protein from Hydrogenovibrio crunogenus (strain DSM 25203 / XCL-2) (Thiomicrospira crunogena).